Reading from the N-terminus, the 267-residue chain is MKKMILIAGPCVIESKDLIFKVAKQLKNFNENPNIEFYFKSSFDKANRTSINSFRGPGLEEGLKILQSVKDEFGMKILTDIHESNQANPVSEVADVLQIPAFLCRQTDLLVAAAKTKAKVNIKKGQFLNPSDIKYSVKKVLQTRGIEDEGYEAAQKNGVFVAERGASFGYGNLVVDMRSLVIMREFAPVIFDATHSVQMPGAAGGSSGGKSEFVEPLARAAAAVGIDGFFFETHINPCEALCDGPNMLDLTRLKNCVNTLLEIQNII.

The protein belongs to the KdsA family.

The protein localises to the cytoplasm. It carries out the reaction D-arabinose 5-phosphate + phosphoenolpyruvate + H2O = 3-deoxy-alpha-D-manno-2-octulosonate-8-phosphate + phosphate. The protein operates within carbohydrate biosynthesis; 3-deoxy-D-manno-octulosonate biosynthesis; 3-deoxy-D-manno-octulosonate from D-ribulose 5-phosphate: step 2/3. Its pathway is bacterial outer membrane biogenesis; lipopolysaccharide biosynthesis. The protein is 2-dehydro-3-deoxyphosphooctonate aldolase of Campylobacter jejuni subsp. doylei (strain ATCC BAA-1458 / RM4099 / 269.97).